The chain runs to 393 residues: Phosphopentomutase (393 aa).

Mn(2+) contacts are provided by D14, D287, H292, D328, H329, and H340.

The protein belongs to the phosphopentomutase family. Mn(2+) is required as a cofactor.

The protein resides in the cytoplasm. It catalyses the reaction 2-deoxy-alpha-D-ribose 1-phosphate = 2-deoxy-D-ribose 5-phosphate. The catalysed reaction is alpha-D-ribose 1-phosphate = D-ribose 5-phosphate. It participates in carbohydrate degradation; 2-deoxy-D-ribose 1-phosphate degradation; D-glyceraldehyde 3-phosphate and acetaldehyde from 2-deoxy-alpha-D-ribose 1-phosphate: step 1/2. Isomerase that catalyzes the conversion of deoxy-ribose 1-phosphate (dRib-1-P) and ribose 1-phosphate (Rib-1-P) to deoxy-ribose 5-phosphate (dRib-5-P) and ribose 5-phosphate (Rib-5-P), respectively. This Geobacillus stearothermophilus (Bacillus stearothermophilus) protein is Phosphopentomutase.